Here is a 130-residue protein sequence, read N- to C-terminus: Secreted cysteine-rich effector 2 (130 aa).

An N-terminal signal peptide occupies residues 1 to 23; that stretch reads MLINAARLLLPAAALVHLSLAWA. Residues 68–85 are plant immunity suppression domain; sequence LKNGEDWCKHCASPRVSV.

It localises to the secreted. Its subcellular location is the host cell. The protein resides in the host periplasm. Functionally, secreted effector required for full virulence of U.virens. Inhibits host pathogen-associated molecular pattern-triggered immunity including flg22- and chitin-induced defense gene expression and oxidative burst. This Ustilaginoidea virens (Rice false smut fungus) protein is Secreted cysteine-rich effector 2.